Reading from the N-terminus, the 265-residue chain is 4-hydroxy-tetrahydrodipicolinate reductase (265 aa).

Residues 7–12 (GASGRM) and D33 each bind NAD(+). NADP(+) is bound at residue R34. NAD(+) contacts are provided by residues 96 to 98 (GTT) and 120 to 123 (AANM). H153 acts as the Proton donor/acceptor in catalysis. H154 lines the (S)-2,3,4,5-tetrahydrodipicolinate pocket. K157 serves as the catalytic Proton donor. Residue 163–164 (GT) participates in (S)-2,3,4,5-tetrahydrodipicolinate binding.

Belongs to the DapB family.

It localises to the cytoplasm. It carries out the reaction (S)-2,3,4,5-tetrahydrodipicolinate + NAD(+) + H2O = (2S,4S)-4-hydroxy-2,3,4,5-tetrahydrodipicolinate + NADH + H(+). The enzyme catalyses (S)-2,3,4,5-tetrahydrodipicolinate + NADP(+) + H2O = (2S,4S)-4-hydroxy-2,3,4,5-tetrahydrodipicolinate + NADPH + H(+). The protein operates within amino-acid biosynthesis; L-lysine biosynthesis via DAP pathway; (S)-tetrahydrodipicolinate from L-aspartate: step 4/4. Its function is as follows. Catalyzes the conversion of 4-hydroxy-tetrahydrodipicolinate (HTPA) to tetrahydrodipicolinate. In Burkholderia lata (strain ATCC 17760 / DSM 23089 / LMG 22485 / NCIMB 9086 / R18194 / 383), this protein is 4-hydroxy-tetrahydrodipicolinate reductase.